The following is a 325-amino-acid chain: Lactonase drp35 (325 aa).

10 residues coordinate Ca(2+): Glu46, Thr108, Gly110, Asp128, Thr131, Tyr133, Asp136, Asn183, Asp234, and Ser235. Asp234 acts as the Proton donor in catalysis.

This sequence belongs to the SMP-30/CGR1 family. Ca(2+) is required as a cofactor.

Its subcellular location is the cytoplasm. Exhibits lactonase activity. Acts in cells with perturbed membrane integrity and is possibly related to the membrane homeostasis. The chain is Lactonase drp35 (drp35) from Staphylococcus epidermidis (strain ATCC 12228 / FDA PCI 1200).